The chain runs to 518 residues: GMP synthase [glutamine-hydrolyzing] (518 aa).

The 193-residue stretch at 11-203 folds into the Glutamine amidotransferase type-1 domain; it reads SILVLDFGSQ…AFDVCQAEAN (193 aa). Cys-88 acts as the Nucleophile in catalysis. Residues His-177 and Glu-179 contribute to the active site. A GMPS ATP-PPase domain is found at 204-393; sequence WSMDDFIDMQ…LGMPSDLVWR (190 aa). Position 231-237 (231-237) interacts with ATP; sequence SGGVDSS.

In terms of assembly, homodimer.

The catalysed reaction is XMP + L-glutamine + ATP + H2O = GMP + L-glutamate + AMP + diphosphate + 2 H(+). The protein operates within purine metabolism; GMP biosynthesis; GMP from XMP (L-Gln route): step 1/1. Catalyzes the synthesis of GMP from XMP. This is GMP synthase [glutamine-hydrolyzing] from Lactiplantibacillus plantarum (strain ATCC BAA-793 / NCIMB 8826 / WCFS1) (Lactobacillus plantarum).